Here is a 99-residue protein sequence, read N- to C-terminus: Leydig cell tumor 10 kDa protein homolog (99 aa).

Residues 1-37 form a disordered region; it reads MAQGQRKFQARKPAKSKTAATASEKNRGPRKGGRVIA. The segment covering 28-37 has biased composition (basic residues); it reads GPRKGGRVIA.

Belongs to the UPF0390 family.

In terms of biological role, may have a potential role in hypercalcemia of malignancy. This is Leydig cell tumor 10 kDa protein homolog from Pongo abelii (Sumatran orangutan).